A 498-amino-acid chain; its full sequence is PE-PGRS family protein PE_PGRS33 (498 aa).

The tract at residues 1–30 (MSFVVTIPEALAAVATDLAGIGSTIGTANA) is essential for translocation to the cell surface. A PE domain is found at 1 to 93 (MSFVVTIPEA…AGSYAAAEAA (93 aa)). Residues 140–260 (GNGGAGGSGA…GLFFGVGGAG (121 aa)) are interacts with TLR2.

The protein belongs to the mycobacterial PE family. PGRS subfamily. Interacts with human TLR2.

The protein localises to the secreted. Its subcellular location is the cell wall. It is found in the cell surface. The protein resides in the cell outer membrane. With respect to regulation, binding of Ca(2+) to PE_PGRS33 induces conformational changes and increases affinity for TLR2. In terms of biological role, induces TNF-alpha release through human Toll-like receptor 2 (TLR2) signaling pathway, leading to macrophage apoptosis. The signaling pathway involves TLR2-dependent activation of the mitogen-activated protein kinase kinase kinase 5 (ASK1), which activates the p38 and JNK MAPKs, leading to enhanced expression of TNF-alpha and tumor necrosis factor receptor superfamily member 1A (TNFRI) genes. Signals are amplified through classical caspase 8-dependent mitochondrial release of cytochrome c, leading to the activation of caspases 9 and 3. Mediates Ca(2+)-dependent up-regulation of the anti-inflammatory cytokine IL-10. Mediates entry into macrophages in a TLR2-dependent mechanism and activates the TLR2-dependent pro-adhesive pathway. In Mycobacterium tuberculosis (strain ATCC 25618 / H37Rv), this protein is PE-PGRS family protein PE_PGRS33.